The primary structure comprises 563 residues: 3-oxosteroid 1-dehydrogenase (563 aa).

7 to 36 serves as a coordination point for FAD; that stretch reads DVVVVGSGAAGMVAALVAAHRGLSTVVVEK.

Belongs to the FAD-dependent oxidoreductase 2 family. 3-oxosteroid dehydrogenase subfamily. The cofactor is FAD.

The catalysed reaction is a 3-oxosteroid + A = a 3-oxo-Delta(1)-steroid + AH2. The enzyme catalyses a 3-oxo-Delta(4)-steroid + A = a 3-oxo-Delta(1,4)-steroid + AH2. It catalyses the reaction 3-oxochol-4-en-22-oyl-CoA + NAD(+) = 3-oxochola-1,4-dien-22-oyl-CoA + NADH + H(+). Functionally, involved in the degradation of cholesterol. Catalyzes the elimination of the C-1 and C-2 hydrogen atoms of the A-ring from the polycyclic ring structure of 3-ketosteroids. Has a clear preference for 3-ketosteroids with a saturated A-ring, displaying highest activity on 5alpha-AD (5alpha-androstane-3,17-dione) and 5alpha-T (5alpha-testosterone, also known as 17beta-hydroxy-5alpha-androstane-3-one). Is also involved in the formation of 3-keto-1,4-diene-steroid from 3-keto-4-ene-steroid. Catalyzes the conversion of 3-oxo-23,24-bisnorchol-4-en-22-oyl-coenzyme A thioester (4-BNC-CoA) to 3-oxo-23,24-bisnorchola-1,4-dien-22-oyl-coenzyme A thioester (1,4-BNC-CoA). The protein is 3-oxosteroid 1-dehydrogenase (kstD) of Mycobacterium tuberculosis (strain ATCC 25618 / H37Rv).